A 690-amino-acid chain; its full sequence is DNA ligase (690 aa).

NAD(+) contacts are provided by residues 36–40, 85–86, and glutamate 124; these read DSVYD and SL. Residue lysine 126 is the N6-AMP-lysine intermediate of the active site. The NAD(+) site is built by arginine 147, glutamate 184, lysine 308, and lysine 332. Zn(2+)-binding residues include cysteine 426, cysteine 429, cysteine 444, and cysteine 449. Residues 614–690 enclose the BRCT domain; that stretch reads NQSNVFDGKS…INENELKLLL (77 aa).

This sequence belongs to the NAD-dependent DNA ligase family. LigA subfamily. Mg(2+) serves as cofactor. The cofactor is Mn(2+).

It catalyses the reaction NAD(+) + (deoxyribonucleotide)n-3'-hydroxyl + 5'-phospho-(deoxyribonucleotide)m = (deoxyribonucleotide)n+m + AMP + beta-nicotinamide D-nucleotide.. DNA ligase that catalyzes the formation of phosphodiester linkages between 5'-phosphoryl and 3'-hydroxyl groups in double-stranded DNA using NAD as a coenzyme and as the energy source for the reaction. It is essential for DNA replication and repair of damaged DNA. In Prochlorococcus marinus (strain NATL2A), this protein is DNA ligase.